The chain runs to 399 residues: Methylthioribose kinase (399 aa).

Residues Asn40, Lys57, and 111–113 (EDL) contribute to the ATP site. Substrate is bound at residue Asp229. 246-248 (DAE) provides a ligand contact to ATP. Arg344 serves as a coordination point for substrate.

Belongs to the methylthioribose kinase family. Homodimer.

It catalyses the reaction 5-(methylsulfanyl)-D-ribose + ATP = 5-(methylsulfanyl)-alpha-D-ribose 1-phosphate + ADP + H(+). It participates in amino-acid biosynthesis; L-methionine biosynthesis via salvage pathway; S-methyl-5-thio-alpha-D-ribose 1-phosphate from S-methyl-5'-thioadenosine (hydrolase route): step 2/2. Catalyzes the phosphorylation of methylthioribose into methylthioribose-1-phosphate. This is Methylthioribose kinase from Klebsiella pneumoniae subsp. pneumoniae (strain ATCC 700721 / MGH 78578).